A 102-amino-acid polypeptide reads, in one-letter code: DNA/RNA-binding protein Alba 2 (102 aa).

Residues R10, R13, R40, R42, N43, R46, and R86 each contribute to the DNA site.

It belongs to the histone-like Alba family. As to quaternary structure, forms homodimers and homotetramers; oligomerization is enhanced and stabilized by DNA. Interacts with Alba 1.

It is found in the cytoplasm. The protein localises to the chromosome. In terms of biological role, binds double-stranded DNA tightly but without sequence specificity. Involved in DNA compaction. This chain is DNA/RNA-binding protein Alba 2, found in Aeropyrum pernix (strain ATCC 700893 / DSM 11879 / JCM 9820 / NBRC 100138 / K1).